Reading from the N-terminus, the 94-residue chain is Pyrimidine/purine nucleoside phosphorylase (94 aa).

This sequence belongs to the nucleoside phosphorylase PpnP family.

The enzyme catalyses a purine D-ribonucleoside + phosphate = a purine nucleobase + alpha-D-ribose 1-phosphate. The catalysed reaction is adenosine + phosphate = alpha-D-ribose 1-phosphate + adenine. It catalyses the reaction cytidine + phosphate = cytosine + alpha-D-ribose 1-phosphate. It carries out the reaction guanosine + phosphate = alpha-D-ribose 1-phosphate + guanine. The enzyme catalyses inosine + phosphate = alpha-D-ribose 1-phosphate + hypoxanthine. The catalysed reaction is thymidine + phosphate = 2-deoxy-alpha-D-ribose 1-phosphate + thymine. It catalyses the reaction uridine + phosphate = alpha-D-ribose 1-phosphate + uracil. It carries out the reaction xanthosine + phosphate = alpha-D-ribose 1-phosphate + xanthine. In terms of biological role, catalyzes the phosphorolysis of diverse nucleosides, yielding D-ribose 1-phosphate and the respective free bases. Can use uridine, adenosine, guanosine, cytidine, thymidine, inosine and xanthosine as substrates. Also catalyzes the reverse reactions. The sequence is that of Pyrimidine/purine nucleoside phosphorylase from Alcanivorax borkumensis (strain ATCC 700651 / DSM 11573 / NCIMB 13689 / SK2).